The following is an 88-amino-acid chain: Translation initiation factor IF-1 2 (88 aa).

Residues 1–72 form the S1-like domain; the sequence is MAKEELIELQ…TKGRINFRHK (72 aa).

It belongs to the IF-1 family. In terms of assembly, component of the 30S ribosomal translation pre-initiation complex which assembles on the 30S ribosome in the order IF-2 and IF-3, IF-1 and N-formylmethionyl-tRNA(fMet); mRNA recruitment can occur at any time during PIC assembly.

It localises to the cytoplasm. In terms of biological role, one of the essential components for the initiation of protein synthesis. Stabilizes the binding of IF-2 and IF-3 on the 30S subunit to which N-formylmethionyl-tRNA(fMet) subsequently binds. Helps modulate mRNA selection, yielding the 30S pre-initiation complex (PIC). Upon addition of the 50S ribosomal subunit IF-1, IF-2 and IF-3 are released leaving the mature 70S translation initiation complex. The protein is Translation initiation factor IF-1 2 of Bordetella avium (strain 197N).